Reading from the N-terminus, the 398-residue chain is uncharacterized protein (398 aa).

This is an uncharacterized protein from Buchnera aphidicola subsp. Baizongia pistaciae (strain Bp).